The following is a 484-amino-acid chain: UDP-N-acetylmuramate--L-alanine ligase (484 aa).

126–132 (GTHGKTT) provides a ligand contact to ATP.

Belongs to the MurCDEF family.

The protein localises to the cytoplasm. The catalysed reaction is UDP-N-acetyl-alpha-D-muramate + L-alanine + ATP = UDP-N-acetyl-alpha-D-muramoyl-L-alanine + ADP + phosphate + H(+). It functions in the pathway cell wall biogenesis; peptidoglycan biosynthesis. Its function is as follows. Cell wall formation. The protein is UDP-N-acetylmuramate--L-alanine ligase of Tolumonas auensis (strain DSM 9187 / NBRC 110442 / TA 4).